The following is a 237-amino-acid chain: Phosphoribosylaminoimidazole-succinocarboxamide synthase (237 aa).

It belongs to the SAICAR synthetase family.

The enzyme catalyses 5-amino-1-(5-phospho-D-ribosyl)imidazole-4-carboxylate + L-aspartate + ATP = (2S)-2-[5-amino-1-(5-phospho-beta-D-ribosyl)imidazole-4-carboxamido]succinate + ADP + phosphate + 2 H(+). It functions in the pathway purine metabolism; IMP biosynthesis via de novo pathway; 5-amino-1-(5-phospho-D-ribosyl)imidazole-4-carboxamide from 5-amino-1-(5-phospho-D-ribosyl)imidazole-4-carboxylate: step 1/2. The polypeptide is Phosphoribosylaminoimidazole-succinocarboxamide synthase (Escherichia coli O7:K1 (strain IAI39 / ExPEC)).